We begin with the raw amino-acid sequence, 714 residues long: Methylmalonyl-CoA mutase (714 aa).

The B12-binding domain maps to 584-714 (RPRILIAKMG…VLNLISQHHD (131 aa)). H597 is a binding site for adenosylcob(III)alamin.

This sequence belongs to the methylmalonyl-CoA mutase family. Homodimer. Interacts with ArgK. Requires adenosylcob(III)alamin as cofactor.

It catalyses the reaction (R)-methylmalonyl-CoA = succinyl-CoA. Its function is as follows. Catalyzes the interconversion of succinyl-CoA and methylmalonyl-CoA. Could be part of a pathway that converts succinate to propionate. This chain is Methylmalonyl-CoA mutase (scpA), found in Escherichia coli (strain K12).